We begin with the raw amino-acid sequence, 350 residues long: Twinfilin-1 (350 aa).

Ser2 is subject to N-acetylserine. Positions 2–139 (SHQTGIQASE…SLHGYKKYLL (138 aa)) constitute an ADF-H 1 domain. Ser143 and Ser277 each carry phosphoserine. Residues 175 to 313 (LQGVAFPISR…TADFLYDEVH (139 aa)) form the ADF-H 2 domain. At Tyr309 the chain carries Phosphotyrosine. The tract at residues 317–350 (HAHKQSFAKPKGPAGKRGIRRLIRGPAEAEATTD) is disordered. Phosphothreonine is present on Thr349.

It belongs to the actin-binding proteins ADF family. Twinfilin subfamily. Interacts with G-actin; ADP-actin form and capping protein (CP). May also be able to interact with TWF2 and phosphoinositides, PI(4,5)P2. When bound to PI(4,5)P2, it is down-regulated. Interacts with ACTG1. In terms of processing, phosphorylated on serine and threonine residues. Widely expressed with highest levels in brain, liver and kidney. Also expressed in heart, lung and testis. Not detected in spleen or skeletal muscle.

The protein resides in the cytoplasm. It is found in the cytoskeleton. In terms of biological role, actin-binding protein involved in motile and morphological processes. Inhibits actin polymerization, likely by sequestering G-actin. By capping the barbed ends of filaments, it also regulates motility. Seems to play an important role in clathrin-mediated endocytosis and distribution of endocytic organelles. This is Twinfilin-1 (Twf1) from Mus musculus (Mouse).